The chain runs to 952 residues: Eukaryotic initiation factor 4F subunit p150 (952 aa).

Disordered stretches follow at residues 1–77 (MTDE…NYNG), 115–389 (GSAP…DAGT), and 481–575 (VIPP…LVPS). The span at 7–16 (HPTQSASKQE) shows a compositional bias: polar residues. Over residues 29 to 46 (ESQQQRGYTNYNNGSNYT) the composition is skewed to low complexity. Polar residues predominate over residues 47-56 (QKKPYNSNRP). Low complexity predominate over residues 65 to 74 (GPNRYNNRGN). Basic and acidic residues predominate over residues 140 to 151 (SGEHLDLKEQHK). Polar residues predominate over residues 154-166 (LQSQERSTVSPQP). At Ser163 the chain carries Phosphoserine. A compositionally biased stretch (low complexity) spans 175–191 (DSTSTSTPTPTPSTNDS). Phosphothreonine is present on Thr181. Residues 188–299 (TNDSKASSEE…KEESTPKVLT (112 aa)) form an interaction with PAB1 region. Phosphoserine is present on Ser195. Over residues 218–228 (AALEKKRKEQL) the composition is skewed to basic and acidic residues. A compositionally biased stretch (polar residues) spans 229 to 244 (EGSSGNNNIPMKTTPE). Composition is skewed to basic and acidic residues over residues 246–276 (VEEKGSDKPEVTEKTKPAEEKSAEPEVKQET), 283–294 (QGEKGQIKEEST), and 309–333 (QQKEREEKTEGKENKEVPVQEETKS). Polar residues predominate over residues 355-368 (TEQSNIDESATTPA). At Ser503 the chain carries Phosphoserine. Basic and acidic residues-rich tracts occupy residues 504-521 (RGHDFRNTSVRNMDDRAN) and 532-569 (RMNDDRRSNRSYTSRRDRERGSYRNEEKREDDKPKEEV). The MIF4G domain occupies 607–850 (ERKMKSLLNK…IDIKELRHDK (244 aa)). The disordered stretch occupies residues 870 to 952 (EEERQRQLKN…ALMGESDDEE (83 aa)). The segment covering 879 to 894 (NNSRSNSRRTNNSSNR) has biased composition (low complexity). A Phosphoserine modification is found at Ser883. Residue Thr888 is modified to Phosphothreonine. A phosphoserine mark is found at Ser892, Ser896, Ser908, and Ser948. Residues 908–922 (SFITTRTYSQRNSQR) show a composition bias toward polar residues.

Belongs to the eukaryotic initiation factor 4G family. In terms of assembly, component of the eIF4F complex, which composition varies with external and internal environmental conditions. It is composed of at least eIF4A (TIF1/TIF2), eIF4E (TIF45) and eIF4G (TIF4631 or TIF4632). Interacts with PAT1 in a RNA-dependent manner.

It is found in the cytoplasm. It localises to the P-body. The protein resides in the stress granule. Functionally, component of the eIF4F complex, which interacts with the mRNA cap structure and serves as an initial point of assembly for the translation apparatus. Stimulates translation by interaction with polyadenylate-binding protein PAB1, bringing the 5'- and 3'-ends of the mRNA in proximity. The formation of this circular mRNP structure appears to be critical for the synergistic effects of the cap and the poly(A) tail in facilitating translation initiation, recycling of ribosomes, and mRNA stability. TIF4631 is probably essential when TIF4632 is missing. The protein is Eukaryotic initiation factor 4F subunit p150 of Saccharomyces cerevisiae (strain ATCC 204508 / S288c) (Baker's yeast).